The chain runs to 2799 residues: Peramine synthetase ppzA (2799 aa).

Residues 270-666 (QERCRLQPNA…VGRKDTQVKI (397 aa)) are adenylation 1. Residues 799–875 (QPLTGMERLL…DLSRQSRYIE (77 aa)) form the Carrier 1 domain. S836 is subject to O-(pantetheine 4'-phosphoryl)serine. The condensation stretch occupies residues 914-1327 (DAYPCTPLQE…ITILTTEDLE (414 aa)). The adenylation 2 stretch occupies residues 1350-1743 (DKVQARPNAP…TLSFVRRKDT (394 aa)). The segment at 1874–1970 (LEIGCGSGMM…EYLVKLIQDI (97 aa)) is methylation (Met) domain. The 79-residue stretch at 2290 to 2368 (SPTTDMEKEL…RLLLDCCCDD (79 aa)) folds into the Carrier 2 domain. Position 2327 is an O-(pantetheine 4'-phosphoryl)serine (S2327). Residues 2420–2737 (TVLLTGANGF…LADMLQDLED (318 aa)) form a thiesterase (TE) domain region.

This sequence belongs to the NRP synthetase family. Requires pantetheine 4'-phosphate as cofactor.

The enzyme catalyses (S)-1-pyrroline-5-carboxylate + L-arginine + S-adenosyl-L-methionine + 2 ATP = peramine + 2 AMP + S-adenosyl-L-homocysteine + 2 diphosphate + H2O + 2 H(+). The protein operates within secondary metabolite biosynthesis. Nonribosomal peptide synthetase; part of the gene cluster that mediates the biosynthesis of pyrrolopyrazines, secondary metabolites showing insecticidal activity. The single multifunctional NRPS ppzA is responsible for the biosynthesis of peramine. The condensation domain of ppzA is proposed to catalyze formation of a peptide bond between 1-pyrroline-5-carboxylate and arginine. The methylation domain of ppzA would catalyze the N-methylation of the alpha-amino group of arginine. The reductase domain is proposed to be responsible for reduction of the thioester and the cyclization to form an iminium ion resulting in release from the peptide synthetase. Deprotonation of this intermediate and oxidation of the pyrroline ring would give rise to peramine. This final oxidation to give the pyrrole functionality may be spontaneous. In Epichloe species that produce only peramine, the peramine synthetase gene is not localized in a gene cluster, in contrast to Metarhizium species that contain additional pyrrolopyrazine biosynthesis genes. The 2-oxoglutarate-Fe(II) type oxidoreductase ppzC hydroxylates peramine to yield the newly identified compound 8-hydroxyperamine whereas ppzD converts L-proline into trans-4-hydroxy-L-proline, a precursor of peramine biosynthesis. This is Peramine synthetase ppzA from Metarhizium majus (strain ARSEF 297).